Consider the following 122-residue polypeptide: Yop proteins translocation protein X (122 aa).

Residues 71–87 (HRAQDYRRELDTLQSLL) are a coiled coil.

In terms of assembly, interacts with YscY.

The protein localises to the secreted. Its function is as follows. Required for Yop secretion. In Yersinia enterocolitica, this protein is Yop proteins translocation protein X (yscX).